The primary structure comprises 637 residues: MAEAGQMEKHGFQTEVKQLLHLMIHSLYSNKEIFLRELVSNASDAADKLRFKALSDNSLYGDDSDLHVRVSVDKDSRTITISDNGVGMTRDDVMNNLGTIAKSGTAEFFGQLSGDEAKDSKLIGQFGVGFYSAFIVADEVTVRTRSALDKDARGVEWRSQGEGDFEIADIDKARRGTDIILHLKDDADEFLDENRLRGIINKYSEHLSIPVQMWKEPVPESEDDEGNKVEGQPGEWETVNSGQALWTREKSDITDEEYKEFYKTVAHDFDEPLLWSHNKVEGTTEYTNLLYIPKRAPWDLWNREQQHGVKLYVKRVFIMDDAEQLMPTYLRFVRGLVDSNDLPLNVSREILQDNKITRAMRNGSTKKVLQMLKKLAKDDKEQYQQFWDTFGNVLKEGPAEDHTNRERIAELLRFASTHNDGAVQSVSLDDYIERMKEGQDKIFYIVADSYEAARNNPALEIFNKKGIEVLLLSERIDEWLMSHLTEFKEKQLQSVTRGDLDLGELDDEEDKAEQEKAEEAFKENLERFEKALGDKVKKVRVTNRLTNSPACIITDDNDMSTQMAKLMEAAGQAVPETKYIFEVNPEHPLVQRMLTKEDDTFKEWAEVLLDQATLAERGNLKDPASFVTRLNKLMLNA.

Positions 1–348 (MAEAGQMEKH…SNDLPLNVSR (348 aa)) are a; substrate-binding. Residues 349 to 565 (EILQDNKITR…DNDMSTQMAK (217 aa)) form a b region. The interval 566-637 (LMEAAGQAVP…TRLNKLMLNA (72 aa)) is c.

The protein belongs to the heat shock protein 90 family. As to quaternary structure, homodimer.

It localises to the cytoplasm. In terms of biological role, molecular chaperone. Has ATPase activity. The polypeptide is Chaperone protein HtpG (Idiomarina loihiensis (strain ATCC BAA-735 / DSM 15497 / L2-TR)).